The primary structure comprises 601 residues: Elongation factor 4 (601 aa).

The tr-type G domain maps to 7-189 (DRIRNFSIIA…ALVTRLPAPK (183 aa)). GTP is bound by residues 19–24 (DHGKST) and 136–139 (NKVD).

It belongs to the TRAFAC class translation factor GTPase superfamily. Classic translation factor GTPase family. LepA subfamily.

It is found in the cell inner membrane. It carries out the reaction GTP + H2O = GDP + phosphate + H(+). Functionally, required for accurate and efficient protein synthesis under certain stress conditions. May act as a fidelity factor of the translation reaction, by catalyzing a one-codon backward translocation of tRNAs on improperly translocated ribosomes. Back-translocation proceeds from a post-translocation (POST) complex to a pre-translocation (PRE) complex, thus giving elongation factor G a second chance to translocate the tRNAs correctly. Binds to ribosomes in a GTP-dependent manner. The chain is Elongation factor 4 from Granulibacter bethesdensis (strain ATCC BAA-1260 / CGDNIH1).